The sequence spans 72 residues: Mitotic-spindle organizing protein 1 (72 aa).

It belongs to the MOZART1 family. In terms of assembly, part of the gamma-tubulin complex.

The protein localises to the cytoplasm. It localises to the cytoskeleton. The protein resides in the microtubule organizing center. Its subcellular location is the centrosome. It is found in the spindle. Functionally, required for gamma-tubulin complex recruitment to the centrosome. The polypeptide is Mitotic-spindle organizing protein 1 (mzt1) (Xenopus tropicalis (Western clawed frog)).